The sequence spans 421 residues: Putative NBPF family member NBPF7 (421 aa).

A coiled-coil region spans residues 87–143; the sequence is IKSMLREELQFKEEKLAEQLKQAEELRQYKVLVHSQERELIQLREKLREGRDASHSL. Disordered stretches follow at residues 179–251, 312–334, and 402–421; these read VHKL…KITS, EKEV…HDVS, and YNSK…FTED. Olduvai domains lie at 190 to 279 and 280 to 391; these read EDEN…NILL and ENQN…RMSQ. The segment covering 194–217 has biased composition (basic and acidic residues); the sequence is DKTKELDKVQESPAPREEQKAEEK. Residues 230-243 show a composition bias toward polar residues; sequence TYSNSHGPSDSNPP. The span at 312 to 333 shows a compositional bias: basic and acidic residues; that stretch reads EKEVLQDSPEERVTTSCSDHDV. The span at 403–421 shows a compositional bias: polar residues; the sequence is NSKPSSIPNTTLQGSFTED.

It belongs to the NBPF family.

The protein resides in the cytoplasm. The protein is Putative NBPF family member NBPF7 of Homo sapiens (Human).